The sequence spans 608 residues: Kelch-like protein 10 (608 aa).

Positions 39–106 constitute a BTB domain; sequence CDVVIKVNGF…AYTRTVPITP (68 aa). Kelch repeat units follow at residues 292-339, 340-386, 388-433, 434-480, 481-527, and 529-574; these read ILFA…YLKG, YVYI…VLSN, IYAM…TLYG, KVYI…AYGE, HVYA…VVDD, and LFVV…VVPG. The residue at position 501 (Ser501) is a Phosphoserine.

As to quaternary structure, self-associates. Interacts with CUL3; indicative for the participation in an E3 ubiquitin ligase complex.

The protein localises to the cytoplasm. Its pathway is protein modification; protein ubiquitination. May be a substrate-specific adapter of a CUL3-based E3 ubiquitin-protein ligase complex which mediates the ubiquitination and subsequent proteasomal degradation of target proteins during spermatogenesis. This Rattus norvegicus (Rat) protein is Kelch-like protein 10 (Klhl10).